A 105-amino-acid polypeptide reads, in one-letter code: Thioredoxin (105 aa).

Residues 1 to 105 (MVNNVTDISF…SLLDWINKSI (105 aa)) enclose the Thioredoxin domain. An intrachain disulfide couples cysteine 30 to cysteine 33.

It belongs to the thioredoxin family.

Component of the thioredoxin-thioredoxin reductase system. Participates in various redox reactions through the reversible oxidation of its active center dithiol to a disulfide and catalyzes dithiol-disulfide exchange reactions. The polypeptide is Thioredoxin (trxA) (Rickettsia typhi (strain ATCC VR-144 / Wilmington)).